The chain runs to 170 residues: Bifunctional protein PyrR (170 aa).

Positions 90-102 (LVLVDDVLMSGRT) match the PRPP-binding motif.

The protein belongs to the purine/pyrimidine phosphoribosyltransferase family. PyrR subfamily.

It carries out the reaction UMP + diphosphate = 5-phospho-alpha-D-ribose 1-diphosphate + uracil. Functionally, regulates the transcription of the pyrimidine nucleotide (pyr) operon in response to exogenous pyrimidines. In terms of biological role, also displays a weak uracil phosphoribosyltransferase activity which is not physiologically significant. The chain is Bifunctional protein PyrR from Pseudomonas paraeruginosa (strain DSM 24068 / PA7) (Pseudomonas aeruginosa (strain PA7)).